Reading from the N-terminus, the 174-residue chain is Translation initiation factor IF-3 (174 aa).

The protein belongs to the IF-3 family. In terms of assembly, monomer.

The protein localises to the cytoplasm. In terms of biological role, IF-3 binds to the 30S ribosomal subunit and shifts the equilibrium between 70S ribosomes and their 50S and 30S subunits in favor of the free subunits, thus enhancing the availability of 30S subunits on which protein synthesis initiation begins. The chain is Translation initiation factor IF-3 from Azorhizobium caulinodans (strain ATCC 43989 / DSM 5975 / JCM 20966 / LMG 6465 / NBRC 14845 / NCIMB 13405 / ORS 571).